The primary structure comprises 408 residues: Serine/threonine transporter SstT (408 aa).

A run of 9 helical transmembrane segments spans residues 11–31 (LANGSLVLQILLGIAAGVILA), 43–63 (FLGSLFVGALKAIAPILVFIL), 81–101 (PIVVLYLFGTFAAALTAVVLS), 141–161 (ALMTGNYIGILAWGVGLGLAL), 192–212 (IGIFGLVAATFAETGFAAIAG), 216–236 (LLAVLLSAMAIIALIVNPLIV), 298–318 (MGGAAITITVLTLAAVHTLGI), 330–350 (VVAAVSACGASGVAGGSLLLI), and 357–377 (FGISNDIAMQVVAVGFIIGVI).

It belongs to the dicarboxylate/amino acid:cation symporter (DAACS) (TC 2.A.23) family.

It is found in the cell inner membrane. The enzyme catalyses L-serine(in) + Na(+)(in) = L-serine(out) + Na(+)(out). It carries out the reaction L-threonine(in) + Na(+)(in) = L-threonine(out) + Na(+)(out). In terms of biological role, involved in the import of serine and threonine into the cell, with the concomitant import of sodium (symport system). This is Serine/threonine transporter SstT from Shewanella sp. (strain W3-18-1).